A 1088-amino-acid polypeptide reads, in one-letter code: Protein argonaute 18 (1088 aa).

The tract at residues 1–220 (MASRGGGQHQ…QPPPDLPQAP (220 aa)) is disordered. 6 stretches are compositionally biased toward gly residues: residues 20-30 (GGYGRGGGGGR), 51-86 (YPGG…GQGR), 95-127 (GRGY…GGYH), 135-148 (GRGG…GGGY), 161-182 (ARGG…YGRG), and 191-206 (GRGG…GGGS). Pro residues predominate over residues 211-220 (QPPPDLPQAP). The PAZ domain occupies 477-574 (TVGYFLNNYG…LPMELCNIVP (98 aa)). The Piwi domain maps to 747 to 1056 (LLLVVMTDDK…LAFRARFYLT (310 aa)).

This sequence belongs to the argonaute family. Ago subfamily.

Its function is as follows. Probably involved in the RNA silencing pathway. May bind to short RNAs such as microRNAs (miRNAs) or short interfering RNAs (siRNAs), and represses the translation of mRNAs which are complementary to them. In Oryza sativa subsp. japonica (Rice), this protein is Protein argonaute 18 (AGO18).